A 261-amino-acid polypeptide reads, in one-letter code: Transmembrane and immunoglobulin domain-containing protein 1 (261 aa).

A signal peptide spans 1-26 (MVWKITGPLQACQLLLVVLSLPQGRT). An Ig-like C2-type 1 domain is found at 27-113 (SSVLTVNGRT…LQRDQTVSVT (87 aa)). The Extracellular segment spans residues 27-215 (SSVLTVNGRT…DFHLLVKDKV (189 aa)). The cysteines at positions 53 and 102 are disulfide-linked. N-linked (GlcNAc...) asparagine glycans are attached at residues Asn-57, Asn-82, Asn-92, Asn-117, Asn-157, and Asn-189. One can recognise an Ig-like C2-type 2 domain in the interval 121–206 (PPLLSGNGFQ…SSSLKMETMD (86 aa)). A disulfide bridge links Cys-142 with Cys-194. A helical transmembrane segment spans residues 216–236 (FVMPAEPIIAACVVVVLTMAF). At 237 to 261 (ALFSRRKRIMKLCGKKNDPNSETAL) the chain is on the cytoplasmic side.

Homodimer. N-glycosylated.

It localises to the cell membrane. Its subcellular location is the cytoplasm. Functionally, may control cell-cell adhesion, cell migration and proliferation, cell morphology, and protects renal epithelial cells from oxidative cell injury to promote cell survival. This is Transmembrane and immunoglobulin domain-containing protein 1 from Mus musculus (Mouse).